Consider the following 91-residue polypeptide: Small ribosomal subunit protein uS19 (91 aa).

The protein belongs to the universal ribosomal protein uS19 family.

In terms of biological role, protein S19 forms a complex with S13 that binds strongly to the 16S ribosomal RNA. The protein is Small ribosomal subunit protein uS19 of Synechococcus sp. (strain WH7803).